The chain runs to 2412 residues: Centrosomal protein of 295 kDa (2412 aa).

The tract at residues 1–540 (MKRKGMNTKL…KQADQPEVCC (540 aa)) is necessary for centriole targeting and microtubule association. S13 carries the phosphoserine modification. Coiled coils occupy residues 63–84 (AEELRAKWEEAQSQKIQNLEKL), 114–134 (AERKRKAEVRHKEALKVQKNQ), 209–273 (DAHL…DLAR), 489–535 (RRKQ…QADQ), and 563–592 (HQLLQQNRLHKETVETARKRLLEYQTVLKE). Disordered stretches follow at residues 600-641 (SALV…YQPV) and 739-762 (LDSQQISSEDSENISSKPSEPSPF). S634 carries the phosphoserine modification. Positions 739–757 (LDSQQISSEDSENISSKPS) are enriched in polar residues. Residues 811–841 (AQQGDLRFLQEQLELQKKVLQARQEAREKLL) are a coiled coil. 4 disordered regions span residues 871–891 (SASAESGNFQTSSTKSDATVS), 973–1005 (DTQSKKIQKQPLPANKKGLLPSQSEVSKAQDGS), 1158–1178 (LSSPSQVTDWGTSRGSVSVRS), and 1216–1240 (WVDTEKESFQSSPLTPENPSSQQTG). 3 stretches are compositionally biased toward polar residues: residues 993 to 1005 (PSQSEVSKAQDGS), 1158 to 1176 (LSSPSQVTDWGTSRGSVSV), and 1224 to 1240 (FQSSPLTPENPSSQQTG). Coiled-coil stretches lie at residues 1300-1327 (QQDSLKALQEQLATQREAIIHSRQEAHE) and 1448-1493 (QHDD…SKQI). S1573 is modified (phosphoserine). 4 disordered regions span residues 1820–1895 (LAHD…LSSV), 1916–1937 (ESFSEQTEHLEQESTNKQEETD), 2028–2048 (DLSSPGTSQEDSDFYQSSESS), and 2089–2111 (TEGSEQSFQQLRPEFSSQESQHA). Basic and acidic residues predominate over residues 1836–1868 (SKSHDDNAEAVKVKKSDVEDHAVLSHAVSKEEA). Residues 1885 to 1895 (QEISQEPLSSV) are compositionally biased toward polar residues. The span at 1921–1935 (QTEHLEQESTNKQEE) shows a compositional bias: basic and acidic residues. Over residues 2089–2108 (TEGSEQSFQQLRPEFSSQES) the composition is skewed to polar residues. The tract at residues 2367–2412 (SLQEAFMTRQTLTERSYQRQREIWNKTRLPQTKVSKEKLPTGCTGS) is ALMS motif.

In terms of assembly, interacts (via ALMS motif) with microtubules; this interaction is direct.

The protein localises to the cytoplasm. Its subcellular location is the cytoskeleton. The protein resides in the microtubule organizing center. It localises to the centrosome. It is found in the centriole. The protein localises to the spindle. Functionally, centriole-enriched microtubule-binding protein involved in centriole biogenesis. Essential for the generation of the distal portion of new-born centrioles in a CPAP- and CEP120-mediated elongation dependent manner during the cell cycle S/G2 phase after formation of the initiating cartwheel structure. Required for the recruitment of centriolar proteins, such as POC1B, POC5 and CEP135, into the distal portion of centrioles. Also required for centriole-to-centrosome conversion during mitotic progression, but is dispensable for cartwheel removal or centriole disengagement. Binds to and stabilizes centriolar microtubule. May be involved in ciliogenesis. The protein is Centrosomal protein of 295 kDa of Mus musculus (Mouse).